The chain runs to 76 residues: MAETDPKTVQDLTSVVQTLLQQMQDKFQTMSDQIIGRIDDMSSRIDDLEKNIADLMTQAGVEELESENKIPATQKS.

This sequence belongs to the HSBP1 family. As to quaternary structure, homohexamer. Associates with heptad repeats of HSF1 trimers and probably also HSF1 monomers, and with HSP70. Association with HSF1 trimers and HSP70 coincides with attenuation of heat shock response and the conversion of HSF1 trimer to monomer.

The protein localises to the nucleus. Its function is as follows. Negative regulator of the heat shock response. Negatively affects HSF1 DNA-binding activity. May have a role in the suppression of the activation of the stress response during the aging process. The polypeptide is Heat shock factor-binding protein 1 (HSBP1) (Homo sapiens (Human)).